The primary structure comprises 281 residues: Tetraspanin-33 (281 aa).

Residues Met1–Tyr23 lie on the Cytoplasmic side of the membrane. A helical membrane pass occupies residues Leu24 to Val44. Over Tyr45–Pro62 the chain is Extracellular. The chain crosses the membrane as a helical span at residues Ala63–Gly83. The Cytoplasmic portion of the chain corresponds to Ser84–Thr94. Residues Phe95–Val115 form a helical membrane-spanning segment. The Extracellular portion of the chain corresponds to Phe116–Asn233. Intrachain disulfides connect Cys154–Cys222, Cys155–Cys187, Cys171–Cys181, and Cys188–Cys201. Asn170 carries an N-linked (GlcNAc...) asparagine glycan. Residues Leu234–Leu254 form a helical membrane-spanning segment. The Cytoplasmic portion of the chain corresponds to Ser255–Ser281.

Belongs to the tetraspanin (TM4SF) family. Homodimer; disulfide-linked.

The protein resides in the cell membrane. The protein localises to the cell junction. Its subcellular location is the adherens junction. It is found in the cytoplasm. Its function is as follows. Part of TspanC8 subgroup, composed of 6 members that interact with the transmembrane metalloprotease ADAM10. This interaction is required for ADAM10 exit from the endoplasmic reticulum and for enzymatic maturation and trafficking to the cell surface as well as substrate specificity. Different TspanC8/ADAM10 complexes have distinct substrates. This Danio rerio (Zebrafish) protein is Tetraspanin-33 (tspan33).